The sequence spans 1082 residues: SURP and G-patch domain-containing protein 2 (1082 aa).

Thr-7 bears the Phosphothreonine mark. The tract at residues 65-97 is disordered; that stretch reads LSGSVAHSRDAGREGLRSDVFPGPSFRSSNPSI. Basic and acidic residues predominate over residues 71–81; sequence HSRDAGREGLR. 2 positions are modified to phosphoserine: Ser-96 and Ser-224. Lys-228 participates in a covalent cross-link: Glycyl lysine isopeptide (Lys-Gly) (interchain with G-Cter in SUMO2). A Phosphothreonine modification is found at Thr-275. Ser-277 carries the phosphoserine modification. Lys-305 is covalently cross-linked (Glycyl lysine isopeptide (Lys-Gly) (interchain with G-Cter in SUMO2)). A phosphoserine mark is found at Ser-315, Ser-573, and Ser-603. One copy of the SURP motif 1 repeat lies at 590 to 633; sequence IDQLVKRVIEGSLSPKERTLLKEDPAYWFLSDENSLEYKYYKLK. Residue Lys-650 forms a Glycyl lysine isopeptide (Lys-Gly) (interchain with G-Cter in SUMO2) linkage. A disordered region spans residues 694 to 779; sequence RRATTGTQTL…QTSSPCPSAD (86 aa). The span at 697–708 shows a compositional bias: low complexity; that stretch reads TTGTQTLLSSGT. Residues 727–738 are compositionally biased toward basic and acidic residues; that stretch reads LPDRNDAAKDCP. Ser-754 and Ser-757 each carry phosphoserine. One copy of the SURP motif 2 repeat lies at 787-830; it reads TAEKLARFVAQVGPEIEQFSIENSTDNPDLWFLHDQNSSAFKFY. Disordered regions lie at residues 849-930, 982-1002, and 1030-1061; these read NLHT…EAAE, RIAY…PKDL, and LGSL…EHKE. Ser-863 carries the phosphoserine modification. Composition is skewed to acidic residues over residues 868–877 and 885–904; these read MEGEAEFEDE and LESP…DGGE. The segment covering 990–999 has biased composition (basic residues); the sequence is GRPMSKKKKP. The Nuclear localization signal signature appears at 995 to 1000; sequence KKKKPK. A G-patch domain is found at 1011–1057; it reads DKNLGFQMLQKMGWKEGHGLGSLGKGIREPVSVGTPSEGEGLGADGQ.

Detected in adult testis, and in fetal brain and kidney.

The protein resides in the nucleus. Its function is as follows. May play a role in mRNA splicing. This chain is SURP and G-patch domain-containing protein 2 (SUGP2), found in Homo sapiens (Human).